The chain runs to 156 residues: Protein GLUTAMINE DUMPER 4 (156 aa).

The Extracellular portion of the chain corresponds to 1 to 39 (MRPLSIKPTSLDVARHATSVESFGNHRPPISPWHSPVPY). The chain crosses the membrane as a helical span at residues 40 to 60 (LFGGLAAMLGLIAFALLILAC). The Cytoplasmic portion of the chain corresponds to 61–156 (SYWRLSTSGD…AKENEETTSQ (96 aa)). Positions 67–87 (TSGDDSGERVDEEKESRSGVK) are disordered. Positions 72 to 84 (SGERVDEEKESRS) are enriched in basic and acidic residues. Positions 99–103 (VIMAG) match the VIMAG motif. Residues 136–156 (AGEEKMGDREKAKENEETTSQ) form a disordered region.

The protein belongs to the GLUTAMINE DUMPER 1 (TC 9.B.60) family. As to expression, expressed in the vascular tissues, even in the minor veins of the leaves.

It localises to the membrane. Probable subunit of an amino acid transporter involved in the regulation of the amino acid metabolism. Stimulates amino acid export by activating nonselective amino acid facilitators. This Arabidopsis thaliana (Mouse-ear cress) protein is Protein GLUTAMINE DUMPER 4 (GDU4).